The chain runs to 181 residues: Oligoribonuclease (181 aa).

The Exonuclease domain occupies 8–171 (LIWVDLEMTG…DDIRESIAEL (164 aa)). The active site involves Tyr-129.

It belongs to the oligoribonuclease family.

It localises to the cytoplasm. Functionally, 3'-to-5' exoribonuclease specific for small oligoribonucleotides. This Aliivibrio fischeri (strain ATCC 700601 / ES114) (Vibrio fischeri) protein is Oligoribonuclease.